The sequence spans 340 residues: DNA-directed RNA polymerase subunit alpha (340 aa).

The interval 1 to 236 (MLSLSKNWNT…EQLQLFISFE (236 aa)) is alpha N-terminal domain (alpha-NTD). Residues 251–340 (FSPYLLKRVD…LSKRYEDSYN (90 aa)) are alpha C-terminal domain (alpha-CTD).

Belongs to the RNA polymerase alpha chain family. As to quaternary structure, homodimer. The RNAP catalytic core consists of 2 alpha, 1 beta, 1 beta' and 1 omega subunit. When a sigma factor is associated with the core the holoenzyme is formed, which can initiate transcription.

The catalysed reaction is RNA(n) + a ribonucleoside 5'-triphosphate = RNA(n+1) + diphosphate. Its function is as follows. DNA-dependent RNA polymerase catalyzes the transcription of DNA into RNA using the four ribonucleoside triphosphates as substrates. This is DNA-directed RNA polymerase subunit alpha from Rickettsia africae (strain ESF-5).